Reading from the N-terminus, the 71-residue chain is MSVYKVIDIIGTSPTSWEQAAAEAVQRARDSVDDIRVARVIEQDMAVDSAGKITYRIKLEVSFKMRPAQPR.

Glutamate 18 lines the Ca(2+) pocket.

This sequence belongs to the dodecin family. Homododecamer; 12 subunits assemble to form a hollow sphere with a diameter of about 75 Angstroms. Calcium ions are bound at the interface between three subunits.

Functionally, binds calcium ions. May play a role in sequestering additional small ligands. The protein is Calcium dodecin (secE2) of Mycobacterium tuberculosis (strain ATCC 25618 / H37Rv).